The primary structure comprises 532 residues: MGLSLSLLLSAWKEVVTTQFFSFKNPVESFLETRSFSLKLKEGGLTSRTNSFKSENPQEKSPKTGMERSLSFNSWEIVTEVETEPMNKEDEEIVEPTKPARNSLNGRNCERIQITKPTITPPTPFVFFSPRPVTELDAAATTLQKVYKSYRTRRNLADCAVVVEELWWKTLDAAALNLSSVAFFEEEKHETAVSKWARARTRAAKVGKGLSKDEKAQKLALQHWLEAIDPRHRYGHNLHFYYDVWSASMSAQPFFYWLDIGDGKDVNLEHHPRSVLQKQCIKYLGPLEREAYEVIVEDGKLMNKQSMTLINSTEDSKSIFVLSTTRTLYVGQKKKGRFQHSSFLSGGATTAAGRLVAREGILEAIWPYSGHYLPTEDNFNEFISFLEENNVDMTNVKRCSVNEEYSSFNSSGYEEEATKEEEAEKKPAETIVTEEQEEEKERERPVFQLAKRLSCKWNSGVGPRIGCVRDYPMELQSQAFEQVSLSPRISPGSTRFPSPYGPIPSPRPSPRVRVSPRLAYMGIPSPRVQVNC.

Disordered stretches follow at residues 47-67 (SRTN…TGME) and 85-104 (PMNK…RNSL). Residues 56–66 (NPQEKSPKTGM) are compositionally biased toward basic and acidic residues. Residues 85–94 (PMNKEDEEIV) show a composition bias toward acidic residues. An IQ domain is found at 136–165 (LDAAATTLQKVYKSYRTRRNLADCAVVVEE). Disordered stretches follow at residues 410 to 443 (SSGY…KERE) and 487 to 513 (PRIS…PRVR). A compositionally biased stretch (polar residues) spans 487 to 496 (PRISPGSTRF). A compositionally biased stretch (pro residues) spans 499 to 509 (PYGPIPSPRPS).

In terms of tissue distribution, expressed in roots, cauline leaves and flowers, and at lower levels in rosette leaves, stems and siliques.

Its subcellular location is the cytoplasm. The protein resides in the nucleus. Its function is as follows. May be involved in biotic and abiotic stress responses. The sequence is that of IQ domain-containing protein IQM4 from Arabidopsis thaliana (Mouse-ear cress).